Here is a 128-residue protein sequence, read N- to C-terminus: Profilin (128 aa).

It belongs to the profilin family.

In terms of biological role, more likely to influence phosphoinositide metabolism than actin assembly. In Homo sapiens (Human), this protein is Profilin.